A 375-amino-acid polypeptide reads, in one-letter code: Odorant receptor 10 (375 aa).

6 helical membrane passes run 32–52 (ISII…GHSW), 58–78 (VIIK…TLIL), 125–145 (NLAL…FTGV), 167–187 (IIYL…IPFT), 250–270 (YICF…LFLL), and 279–299 (IVIV…FYWH).

Belongs to the insect chemoreceptor superfamily. Heteromeric odorant receptor channel (TC 1.A.69) family. Expressed in female antenna, maxillary palp and proboscis. Expressed in female body. Expressed in male tissues.

It is found in the cell membrane. Functionally, odorant receptor which complexes with Orco, a coreceptor, to form odorant-sensing units, providing sensitive and prolonged odorant signaling and calcium permeability. Can sense indole, 1-octen-3-ol, 3-methyindole and an insect repellent DEET. The chain is Odorant receptor 10 from Aedes albopictus (Asian tiger mosquito).